The primary structure comprises 680 residues: DNA-directed RNA polymerase subunit beta' (680 aa).

Cys69, Cys71, Cys87, and Cys90 together coordinate Zn(2+). Positions 489, 491, and 493 each coordinate Mg(2+).

This sequence belongs to the RNA polymerase beta' chain family. RpoC1 subfamily. In plastids the minimal PEP RNA polymerase catalytic core is composed of four subunits: alpha, beta, beta', and beta''. When a (nuclear-encoded) sigma factor is associated with the core the holoenzyme is formed, which can initiate transcription. It depends on Mg(2+) as a cofactor. Requires Zn(2+) as cofactor.

It is found in the plastid. The protein localises to the chloroplast. It carries out the reaction RNA(n) + a ribonucleoside 5'-triphosphate = RNA(n+1) + diphosphate. DNA-dependent RNA polymerase catalyzes the transcription of DNA into RNA using the four ribonucleoside triphosphates as substrates. This is DNA-directed RNA polymerase subunit beta' from Citrus sinensis (Sweet orange).